The sequence spans 209 residues: Imidazole glycerol phosphate synthase subunit HisH (209 aa).

One can recognise a Glutamine amidotransferase type-1 domain in the interval 3–209; sequence KIAIIDYGMG…SILKNFGEMK (207 aa). Residue Cys-81 is the Nucleophile of the active site. Active-site residues include His-190 and Glu-192.

As to quaternary structure, heterodimer of HisH and HisF.

The protein resides in the cytoplasm. The enzyme catalyses 5-[(5-phospho-1-deoxy-D-ribulos-1-ylimino)methylamino]-1-(5-phospho-beta-D-ribosyl)imidazole-4-carboxamide + L-glutamine = D-erythro-1-(imidazol-4-yl)glycerol 3-phosphate + 5-amino-1-(5-phospho-beta-D-ribosyl)imidazole-4-carboxamide + L-glutamate + H(+). It carries out the reaction L-glutamine + H2O = L-glutamate + NH4(+). It participates in amino-acid biosynthesis; L-histidine biosynthesis; L-histidine from 5-phospho-alpha-D-ribose 1-diphosphate: step 5/9. Functionally, IGPS catalyzes the conversion of PRFAR and glutamine to IGP, AICAR and glutamate. The HisH subunit catalyzes the hydrolysis of glutamine to glutamate and ammonia as part of the synthesis of IGP and AICAR. The resulting ammonia molecule is channeled to the active site of HisF. The polypeptide is Imidazole glycerol phosphate synthase subunit HisH (Geobacter sulfurreducens (strain ATCC 51573 / DSM 12127 / PCA)).